We begin with the raw amino-acid sequence, 1363 residues long: DNA-directed RNA polymerase subunit beta (1363 aa).

The protein belongs to the RNA polymerase beta chain family. In terms of assembly, the RNAP catalytic core consists of 2 alpha, 1 beta, 1 beta' and 1 omega subunit. When a sigma factor is associated with the core the holoenzyme is formed, which can initiate transcription.

It carries out the reaction RNA(n) + a ribonucleoside 5'-triphosphate = RNA(n+1) + diphosphate. In terms of biological role, DNA-dependent RNA polymerase catalyzes the transcription of DNA into RNA using the four ribonucleoside triphosphates as substrates. The protein is DNA-directed RNA polymerase subunit beta of Neorickettsia risticii (Ehrlichia risticii).